The chain runs to 256 residues: Major prion protein 2 (256 aa).

Positions 1 to 24 (MVKSHIGSWILVLFVAMWSDVALC) are cleaved as a signal peptide. The segment at 25-233 (KKRPKPGGGW…ESEAYYQRGA (209 aa)) is interaction with GRB2, ERI3 and SYN1. The disordered stretch occupies residues 28-110 (PKPGGGWNTG…QWNKPSKPKT (83 aa)). Tandem repeats lie at residues 54 to 62 (PQEGGDWGQ), 63 to 70 (PHGGGWGQ), 71 to 78 (PHVGGWGQ), 79 to 86 (PHGGGWGQ), and 87 to 95 (PHGGGGWGQ). Residues 54 to 95 (PQEGGDWGQPHGGGWGQPHVGGWGQPHGGGWGQPHGGGGWGQ) form a 5 X 8 AA tandem repeats of P-H-G-G-G-W-G-Q region. Residues 58–99 (GDWGQPHGGGWGQPHVGGWGQPHGGGWGQPHGGGGWGQGGTH) show a composition bias toward gly residues. Residues histidine 64, glycine 65, glycine 66, histidine 72, glycine 74, histidine 80, glycine 81, glycine 82, histidine 88, glycine 90, and glycine 91 each coordinate Cu(2+). The cysteines at positions 182 and 217 are disulfide-linked. Residues asparagine 184 and asparagine 200 are each glycosylated (N-linked (GlcNAc...) asparagine). Residue alanine 233 is the site of GPI-anchor amidated alanine attachment. A propeptide spans 234-256 (SVILFSSPPVILLISFLIFLIVG) (removed in mature form).

It belongs to the prion family. In terms of assembly, monomer and homodimer. Has a tendency to aggregate into amyloid fibrils containing a cross-beta spine, formed by a steric zipper of superposed beta-strands. Soluble oligomers may represent an intermediate stage on the path to fibril formation. Copper binding may promote oligomerization. Interacts with GRB2, APP, ERI3/PRNPIP and SYN1. Mislocalized cytosolically exposed PrP interacts with MGRN1; this interaction alters MGRN1 subcellular location and causes lysosomal enlargement. Interacts with KIAA1191.

Its subcellular location is the cell membrane. It localises to the golgi apparatus. Its function is as follows. Its primary physiological function is unclear. Has cytoprotective activity against internal or environmental stresses. May play a role in neuronal development and synaptic plasticity. May be required for neuronal myelin sheath maintenance. May play a role in iron uptake and iron homeostasis. Soluble oligomers are toxic to cultured neuroblastoma cells and induce apoptosis (in vitro). Association with GPC1 (via its heparan sulfate chains) targets PRNP to lipid rafts. Also provides Cu(2+) or Zn(2+) for the ascorbate-mediated GPC1 deaminase degradation of its heparan sulfate side chains. The protein is Major prion protein 2 of Tragelaphus strepsiceros (Greater kudu).